A 428-amino-acid chain; its full sequence is Enolase (428 aa).

Q163 provides a ligand contact to (2R)-2-phosphoglycerate. E205 serves as the catalytic Proton donor. The Mg(2+) site is built by D242, E286, and D313. Residues K338, R367, S368, and K389 each contribute to the (2R)-2-phosphoglycerate site. The Proton acceptor role is filled by K338.

The protein belongs to the enolase family. It depends on Mg(2+) as a cofactor.

The protein resides in the cytoplasm. It is found in the secreted. Its subcellular location is the cell surface. It carries out the reaction (2R)-2-phosphoglycerate = phosphoenolpyruvate + H2O. It functions in the pathway carbohydrate degradation; glycolysis; pyruvate from D-glyceraldehyde 3-phosphate: step 4/5. Functionally, catalyzes the reversible conversion of 2-phosphoglycerate (2-PG) into phosphoenolpyruvate (PEP). It is essential for the degradation of carbohydrates via glycolysis. This Bordetella avium (strain 197N) protein is Enolase.